A 992-amino-acid polypeptide reads, in one-letter code: Probable RNA-dependent RNA polymerase 3 (992 aa).

Residues 88 to 113 (PRLSPGESPVQSPRTPAKKSCRASQD) form a disordered region.

Belongs to the RdRP family.

The catalysed reaction is RNA(n) + a ribonucleoside 5'-triphosphate = RNA(n+1) + diphosphate. Probably involved in the RNA silencing pathway and required for the generation of small interfering RNAs (siRNAs). The sequence is that of Probable RNA-dependent RNA polymerase 3 (RDR3) from Arabidopsis thaliana (Mouse-ear cress).